We begin with the raw amino-acid sequence, 278 residues long: Polyamine aminopropyltransferase (278 aa).

Residues 5–238 form the PABS domain; it reads ELWFTEQQTP…GLWSFTLGSK (234 aa). Position 34 (glutamine 34) interacts with S-methyl-5'-thioadenosine. Histidine 65 and aspartate 89 together coordinate spermidine. Residues glutamate 109 and 140–141 contribute to the S-methyl-5'-thioadenosine site; that span reads DG. Catalysis depends on aspartate 158, which acts as the Proton acceptor. 158-161 serves as a coordination point for spermidine; sequence DSTD. Proline 165 is a binding site for S-methyl-5'-thioadenosine.

It belongs to the spermidine/spermine synthase family. In terms of assembly, homodimer or homotetramer.

The protein localises to the cytoplasm. It catalyses the reaction S-adenosyl 3-(methylsulfanyl)propylamine + putrescine = S-methyl-5'-thioadenosine + spermidine + H(+). It functions in the pathway amine and polyamine biosynthesis; spermidine biosynthesis; spermidine from putrescine: step 1/1. In terms of biological role, catalyzes the irreversible transfer of a propylamine group from the amino donor S-adenosylmethioninamine (decarboxy-AdoMet) to putrescine (1,4-diaminobutane) to yield spermidine. The chain is Polyamine aminopropyltransferase from Caldicellulosiruptor bescii (strain ATCC BAA-1888 / DSM 6725 / KCTC 15123 / Z-1320) (Anaerocellum thermophilum).